A 1135-amino-acid chain; its full sequence is MRILKLLELVVKVSLFTIALSSVLLAFLTFRATDAKVEIIRGDHPEIYDDSAENEVPTAASIQREAILETLTNLVLESRTPGTRQIREEKLTIPISTEPATQKTISVLDLPNNCLNASSLKCEIKGISTYNVYYQVENNGVIYSSVSDSAEGLEKCDNSLNLPKRFSKVPVIPITKLDNKRHFSVGTNFFIPESLTQDNYPITYNSYPTNGTVSLQTVKLSGDCKITKSNFANPYTVSITSPEKIMGYLIKKPGENVEHKVIAFSGSASITFTEEMLDGEHNLLCGDKSAKIPKTNKRVRDCIIKYSKSIYKQTACINFSWIRLILIALLIYFPIRWLVNKTTKPLFLWYDLMGLITYPVLLLINCLWKYFPFKCSNCGNLCIVTRECTKVCICNKSKASKEHSSECPILSKEADHDYNKHKWTSMEWFHLIVNTKLSLSLLKFVTEILIGLVILSQIPMSMAQTTQCLSGCFYVPGCPFLVTSKFEKCPEKDQCYCNVKEDKIIESIFGTNIVIEGPNDCIENQNCIARPSIDNLIKCRLGCEYLDLFQNKPLYNGFSDYTESSLGLTSVGLYEAKRLRNGIIDSYNRTDKISGMIAGDSLDKNETSIPENILPRQSLIFDSVVDGKYRYMIEQSLLGGGGTIFMLNDKTSETAKKFVIYIKSVGIHHEVSEEYTTAPIQSTHTDFYPTCIGNCDTCRKNQALTGFQDFCITPTSYWGCEEAWCFAINEGATCGFCRNIYDIDKSYRIYSVLKSTIVADVCISGILGGQCSRITEEVPYENTLFQADIQSDLHNDGITIGELIAHGPDSHIYSGNIANLNDPVKMFGHPQLTHDGVPIFTKKTLEGDDMSWDCAATGKKSVTIKTCGYDTYRFRSGLEQISDIPVSFKDFSSFFLEKSFSLGELKIVVDLPSDLFKVVPKKPSITSTSLNCNGCLLCGQGLSCILEFFSDLTFSTAISIDACSLSTYQLAVKKGSNKYNITMFCSANPDKKKMTLYPEGNPDIPVEVLVNNVIIEEPENIIDQNDEYAHEEQQYNSDSSAWGFWDYIKSPFNFIASYFGSFFDTIRVVLLIAFIFLVIYFCSILTSICKGYVKHKSYKSRSKIEDDDEPEIKAPMLMKDTMTRRRPPMDFSHLV.

Residues 1–35 form the signal peptide; it reads MRILKLLELVVKVSLFTIALSSVLLAFLTFRATDA. Over 36–314 the chain is Lumenal; it reads KVEIIRGDHP…KYSKSIYKQT (279 aa). The Cell attachment site motif lies at 41 to 43; that stretch reads RGD. The N-linked (GlcNAc...) asparagine; by host glycan is linked to Asn116. Cys122 and Cys156 are joined by a disulfide. The interval 177 to 195 is non-covalent dimerization; it reads LDNKRHFSVGTNFFIPESL. Asn210 is a glycosylation site (N-linked (GlcNAc...) asparagine; by host). An intrachain disulfide couples Cys224 to Cys285. The chain crosses the membrane as a helical span at residues 315 to 366; it reads ACINFSWIRLILIALLIYFPIRWLVNKTTKPLFLWYDLMGLITYPVLLLINC. Residues 367-484 lie on the Cytoplasmic side of the membrane; that stretch reads LWKYFPFKCS…VPGCPFLVTS (118 aa). Residues 437 to 484 form a signal for signal peptide peptidase region; the sequence is LSLSLLKFVTEILIGLVILSQIPMSMAQTTQCLSGCFYVPGCPFLVTS. At 485-1067 the chain is on the lumenal side; it reads KFEKCPEKDQ…YFGSFFDTIR (583 aa). N-linked (GlcNAc...) asparagine; by host glycans are attached at residues Asn588, Asn605, and Asn980. A helical membrane pass occupies residues 1068-1088; sequence VVLLIAFIFLVIYFCSILTSI. The Cytoplasmic segment spans residues 1089–1135; the sequence is CKGYVKHKSYKSRSKIEDDDEPEIKAPMLMKDTMTRRRPPMDFSHLV.

The protein belongs to the tospovirus envelope glycoprotein family. As to quaternary structure, homodimer; disulfide-linked. Heterodimer with Glycoprotein C. Interacts with nucleoprotein. In terms of assembly, heterodimer with Glycoprotein N. Interacts with nucleoprotein. In terms of processing, specific enzymatic cleavages in vivo yield mature proteins including Glycoprotein N and Glycoprotein C. Post-translationally, glycosylated with O-linked glycans. Glycosylation is essential for proper subcellular location. Cleaved at acidic pH.

It is found in the virion membrane. The protein resides in the host Golgi apparatus membrane. The protein localises to the host endoplasmic reticulum membrane. Forms the spikes present at the surface of the virion together with Glycoprotein C. They are able to attach the virion to a cell receptor and to promote fusion of membranes after endocytosis of the virion. Plays a role in virus binding and/or entry into the vector midgut. Functionally, forms the spikes present at the surface of the virion together with Glycoprotein N. They are able to attach the virion to a cell receptor and to promote fusion of membranes after endocytosis of the virion. Probable class II fusion protein. The chain is Envelopment polyprotein (GP) from Frankliniella occidentalis (Western flower thrips).